Reading from the N-terminus, the 64-residue chain is Conotoxin Pn-B01121 (64 aa).

An N-terminal signal peptide occupies residues 1 to 22 (MCCLPVFVILLLLIASAPSVDA). Positions 23–48 (LPKTKDDMSLASFHDNAKRTLQILSN) are excised as a propeptide. Position 63 is a tryptophan amide (W63).

The protein belongs to the conotoxin T superfamily. Contains 2 disulfide bonds that can be either 'C1-C3, C2-C4' or 'C1-C4, C2-C3', since these disulfide connectivities have been observed for conotoxins with cysteine framework V (for examples, see AC P0DQQ7 and AC P81755). As to expression, expressed by the venom duct.

It is found in the secreted. The protein is Conotoxin Pn-B01121 of Conus pennaceus (Feathered cone).